We begin with the raw amino-acid sequence, 181 residues long: Small ribosomal subunit protein uS4 (181 aa).

The S4 RNA-binding domain maps to R108–R180.

This sequence belongs to the universal ribosomal protein uS4 family. Part of the 30S ribosomal subunit. Contacts protein S5. The interaction surface between S4 and S5 is involved in control of translational fidelity.

In terms of biological role, one of the primary rRNA binding proteins, it binds directly to 16S rRNA where it nucleates assembly of the body of the 30S subunit. Functionally, with S5 and S12 plays an important role in translational accuracy. This chain is Small ribosomal subunit protein uS4, found in Methanocorpusculum labreanum (strain ATCC 43576 / DSM 4855 / Z).